The sequence spans 1612 residues: MNLLRKKVKNEKSLSTLLINEEENKNIEMTTLKDKKEMKNENLSKINVKKENHDKNHDKNHDKNHDKNHDKNHDKNHDKNHDKNHDKNHDKNHVKNNVEYYNDVFTHLYNCDDGGEEPKEYSHKKKQVNNKKKWKKQYKAVKLYMNMFLNNYKLKKGKGNCKNLSSVKKRRKKKKIIQNDYIRIINAEKEYVQKYHEDKIFLDNIKNVSSCELIKDCSYSVFFYNLFIKGLYLNKQNLEHATEKEHIQKNITKNITKNELHINKTSEHVSNITKLKKNYNKHNVILFKGKYTRQLICDYLKFLLNSIQNEHTIKAHFYILDYVNDLENKKKEMAKKIKMESFIFTNSNEEDKLCKDIILNCNILNEQKEDDNKSDNPLYSNNNTLKEQNTSTPLPSHEIQTESMNSPNLLNVKNMNQTKDDNGCTKEEIIKSNNLMKTYDIKINEHIYNKILNNFISELKSFFFSILEKIRSSKLLLRFIVTLSEICLILTPHYVNIINFIEILCDFGHIIPIHYISHFIHFFQCNKNIFIQKYKEFQHCIINNDPIKIQSVGARLIGFIKILQKKIHLNNNEQSMYSFFLNLLLSECLPINHLGFCNRQSAKNNFHYFFQESLDCCYKKFKEEQILYDNFELNIQNNIKNYKKIKTIIEHEIELNSDKYLIKEEDENFISAKNVISDEQDGEDTLYKKRKREEFKETSLTKKKQKKKNDEIKKTGEEKKKTGEEKKKTGEEKKKTGEEKKKTGEEKKKTGEEKKKTGEEKKKTGEEKKKTGEEKKLTNDVTHLTNDVTHLTNDVTHLTNDVTHLTNDVTHLTNDVTHLTNDVTHLTNDVTHLTNDVTHLTNDVTHLTNDVTHLTNDVTHLTNEKYIEEKDTKEMYLSYMSFISLVAFIKYPEIITQDNIILVEDVYNSFKTFLNYINSLEKEKKENFKRTKKYMNMIKAYLFNDHIDILANVHIFKVLVYDENFLRVLFFNILVVLNYLNRELQICVKDDNELDNNNNKNNNNNKNNNNNKNNNNNNNNNNNNNNNNDNGVKKNDPAIISPRSSFLFFVEYDKNDDHELGDPEKINNHLNGLMTRGHQKSIRENIKNKESGKSSILTTGTSNNNNNVNNMNNNMNNNMNNNMNNHMNSNNNVVDSNSTNFKENVKNKDNSNNRNMSVNQNILHNKTKDIKFCKENDDKFVIKEKIKKIMFTFVKELLNYLDGFINSNHNFMLAKEYSWYVWKKQLNVAKYNKDDYDISFKFKCIDENIKEQNYDINQTTNNNTYNNQTSNHMNENLHTDESSKSNNNQDKTVYTNEVSYLPNIPKKNKKTDNQSPVQTLINIIQNFELLNKKMKPFYCNNKNKNKNKNKNKNKNMEQINNKDITMNLCNNNNNIIHNKEQDNIQQHDDNNIINTNNDQSSYNNDIFHINNFLLEINKIYLRREAEFWELDESDSLTDEKKNDSNKKILIEKLIDKLDDYKKKINIDNDPINEIEENEKSKNNPVFKFRLSKLFILKYIDLYTIVKNKEFTTDCDFLYNLMIQMDKNVEKKKSLLNKGVVENDEDINVEHHINMEDEKNEKLNDKEGEYEDVTENLNEQEAEEEAEEEAEEEEEEEDKFLTPEHLPINVEIK.

A coiled-coil region spans residues 23-52; sequence ENKNIEMTTLKDKKEMKNENLSKINVKKEN. Basic and acidic residues predominate over residues 46 to 93; sequence INVKKENHDKNHDKNHDKNHDKNHDKNHDKNHDKNHDKNHDKNHDKNH. 2 disordered regions span residues 46–94 and 369–400; these read INVK…KNHV and EDDN…HEIQ. Residues 375 to 394 show a composition bias toward polar residues; it reads DNPLYSNNNTLKEQNTSTPL. The helical transmembrane segment at 479–499 threads the bilayer; that stretch reads FIVTLSEICLILTPHYVNIIN. 4 disordered regions span residues 698–777, 992–1037, 1091–1157, and 1257–1291; these read TSLT…EKKL, NELD…KNDP, SGKS…RNMS, and NQTT…NQDK. Positions 708-777 are enriched in basic and acidic residues; the sequence is KNDEIKKTGE…KKKTGEEKKL (70 aa). Low complexity-rich tracts occupy residues 996–1028, 1102–1140, and 1257–1271; these read NNNN…NNNN, SNNN…NSTN, and NQTT…QTSN. 3 coiled-coil regions span residues 1338–1362, 1444–1469, and 1553–1601; these read YCNN…INNK, SNKK…IDND, and NMED…KFLT. Residues 1554 to 1566 are compositionally biased toward basic and acidic residues; sequence MEDEKNEKLNDKE. The disordered stretch occupies residues 1554-1612; that stretch reads MEDEKNEKLNDKEGEYEDVTENLNEQEAEEEAEEEAEEEEEEEDKFLTPEHLPINVEIK. Over residues 1567 to 1597 the composition is skewed to acidic residues; sequence GEYEDVTENLNEQEAEEEAEEEAEEEEEEED.

The protein localises to the membrane. This is an uncharacterized protein from Plasmodium falciparum (isolate 3D7).